We begin with the raw amino-acid sequence, 458 residues long: UPF0210 protein MmarC5_0151 (458 aa).

It belongs to the UPF0210 family.

The chain is UPF0210 protein MmarC5_0151 from Methanococcus maripaludis (strain C5 / ATCC BAA-1333).